The primary structure comprises 90 residues: Actobindin-B/C (90 aa).

2 WH2 domains span residues 4-21 (TANP…LKHA) and 40-57 (DHSS…LKHV). The disordered stretch occupies residues 57–90 (VETQDRSAPVTEGATVKSNNHSALLGEIKSKAQE).

Monomer.

Its function is as follows. Is able to bind two actin monomers at high concentrations of G-actin. Inhibits actin polymerization by sequestering G-actin and stabilizing actin dimers. This chain is Actobindin-B/C (abnB), found in Dictyostelium discoideum (Social amoeba).